The sequence spans 336 residues: Dihydroorotate dehydrogenase (quinone) (336 aa).

Residues 62-66 (AGLDK) and Thr86 contribute to the FMN site. Lys66 is a substrate binding site. 111–115 (NRMGF) provides a ligand contact to substrate. 2 residues coordinate FMN: Asn139 and Asn172. Asn172 contributes to the substrate binding site. Ser175 functions as the Nucleophile in the catalytic mechanism. Position 177 (Asn177) interacts with substrate. FMN is bound by residues Lys217 and Thr245. 246 to 247 (NT) provides a ligand contact to substrate. FMN is bound by residues Gly268, Gly297, and 318 to 319 (YS).

The protein belongs to the dihydroorotate dehydrogenase family. Type 2 subfamily. As to quaternary structure, monomer. The cofactor is FMN.

The protein resides in the cell membrane. The catalysed reaction is (S)-dihydroorotate + a quinone = orotate + a quinol. It functions in the pathway pyrimidine metabolism; UMP biosynthesis via de novo pathway; orotate from (S)-dihydroorotate (quinone route): step 1/1. Its function is as follows. Catalyzes the conversion of dihydroorotate to orotate with quinone as electron acceptor. This Vibrio atlanticus (strain LGP32) (Vibrio splendidus (strain Mel32)) protein is Dihydroorotate dehydrogenase (quinone).